We begin with the raw amino-acid sequence, 461 residues long: ATP synthase subunit beta (461 aa).

151–158 provides a ligand contact to ATP; the sequence is GGAGVGKT.

This sequence belongs to the ATPase alpha/beta chains family. F-type ATPases have 2 components, CF(1) - the catalytic core - and CF(0) - the membrane proton channel. CF(1) has five subunits: alpha(3), beta(3), gamma(1), delta(1), epsilon(1). CF(0) has three main subunits: a(1), b(2) and c(9-12). The alpha and beta chains form an alternating ring which encloses part of the gamma chain. CF(1) is attached to CF(0) by a central stalk formed by the gamma and epsilon chains, while a peripheral stalk is formed by the delta and b chains.

The protein localises to the cell inner membrane. The enzyme catalyses ATP + H2O + 4 H(+)(in) = ADP + phosphate + 5 H(+)(out). Its function is as follows. Produces ATP from ADP in the presence of a proton gradient across the membrane. The catalytic sites are hosted primarily by the beta subunits. The polypeptide is ATP synthase subunit beta (Coxiella burnetii (strain Dugway 5J108-111)).